Consider the following 165-residue polypeptide: Crossover junction endodeoxyribonuclease RuvC (165 aa).

Active-site residues include Asp7, Glu67, and Asp140. Asp7, Glu67, and Asp140 together coordinate Mg(2+).

This sequence belongs to the RuvC family. Homodimer which binds Holliday junction (HJ) DNA. The HJ becomes 2-fold symmetrical on binding to RuvC with unstacked arms; it has a different conformation from HJ DNA in complex with RuvA. In the full resolvosome a probable DNA-RuvA(4)-RuvB(12)-RuvC(2) complex forms which resolves the HJ. Mg(2+) is required as a cofactor.

Its subcellular location is the cytoplasm. The enzyme catalyses Endonucleolytic cleavage at a junction such as a reciprocal single-stranded crossover between two homologous DNA duplexes (Holliday junction).. The RuvA-RuvB-RuvC complex processes Holliday junction (HJ) DNA during genetic recombination and DNA repair. Endonuclease that resolves HJ intermediates. Cleaves cruciform DNA by making single-stranded nicks across the HJ at symmetrical positions within the homologous arms, yielding a 5'-phosphate and a 3'-hydroxyl group; requires a central core of homology in the junction. The consensus cleavage sequence is 5'-(A/T)TT(C/G)-3'. Cleavage occurs on the 3'-side of the TT dinucleotide at the point of strand exchange. HJ branch migration catalyzed by RuvA-RuvB allows RuvC to scan DNA until it finds its consensus sequence, where it cleaves and resolves the cruciform DNA. The chain is Crossover junction endodeoxyribonuclease RuvC from Halothermothrix orenii (strain H 168 / OCM 544 / DSM 9562).